The primary structure comprises 211 residues: UPF0319 protein VC_A0026 (211 aa).

Positions 1–21 are cleaved as a signal peptide; it reads MKPMQRLTCLLALCFAASASA.

This sequence belongs to the UPF0319 family.

This Vibrio cholerae serotype O1 (strain ATCC 39315 / El Tor Inaba N16961) protein is UPF0319 protein VC_A0026.